Reading from the N-terminus, the 327-residue chain is BarH-like 1 homeobox protein (327 aa).

Disordered regions lie at residues methionine 1–arginine 90, alanine 112–alanine 184, and glycine 305–arginine 327. The segment covering arginine 33–proline 54 has biased composition (low complexity). Polar residues predominate over residues glutamine 79–arginine 90. Basic and acidic residues-rich tracts occupy residues alanine 133 to lysine 143 and serine 152 to serine 166. The homeobox DNA-binding region spans proline 178–threonine 237. Low complexity predominate over residues leucine 316–arginine 327.

The protein belongs to the BAR homeobox family.

The protein resides in the nucleus. The polypeptide is BarH-like 1 homeobox protein (BARHL1) (Homo sapiens (Human)).